The chain runs to 397 residues: Elongation factor Tu (397 aa).

Residues 10-206 enclose the tr-type G domain; sequence KPHVNIGTIG…AVDESIPDPV (197 aa). The tract at residues 19–26 is G1; sequence GHVDHGKT. Residue 19–26 coordinates GTP; it reads GHVDHGKT. Residue T26 coordinates Mg(2+). The interval 62–66 is G2; the sequence is GITIN. The tract at residues 83-86 is G3; the sequence is DAPG. GTP-binding positions include 83–87 and 138–141; these read DAPGH and NKSD. Residues 138 to 141 form a G4 region; it reads NKSD. Residues 176 to 178 form a G5 region; the sequence is SAL.

It belongs to the TRAFAC class translation factor GTPase superfamily. Classic translation factor GTPase family. EF-Tu/EF-1A subfamily. Monomer.

Its subcellular location is the cytoplasm. It catalyses the reaction GTP + H2O = GDP + phosphate + H(+). Functionally, GTP hydrolase that promotes the GTP-dependent binding of aminoacyl-tRNA to the A-site of ribosomes during protein biosynthesis. The polypeptide is Elongation factor Tu (Mycobacteroides abscessus (strain ATCC 19977 / DSM 44196 / CCUG 20993 / CIP 104536 / JCM 13569 / NCTC 13031 / TMC 1543 / L948) (Mycobacterium abscessus)).